Consider the following 78-residue polypeptide: Small ribosomal subunit protein bS16 (78 aa).

This sequence belongs to the bacterial ribosomal protein bS16 family.

The protein is Small ribosomal subunit protein bS16 of Maridesulfovibrio salexigens (strain ATCC 14822 / DSM 2638 / NCIMB 8403 / VKM B-1763) (Desulfovibrio salexigens).